A 378-amino-acid polypeptide reads, in one-letter code: Erythronate-4-phosphate dehydrogenase (378 aa).

Substrate contacts are provided by serine 45 and threonine 66. The NAD(+) site is built by aspartate 146 and threonine 175. Residue arginine 208 is part of the active site. Residue aspartate 232 participates in NAD(+) binding. Glutamate 237 is a catalytic residue. Residue histidine 254 is the Proton donor of the active site. Glycine 257 serves as a coordination point for NAD(+). Substrate is bound at residue tyrosine 258.

It belongs to the D-isomer specific 2-hydroxyacid dehydrogenase family. PdxB subfamily. Homodimer.

It is found in the cytoplasm. The catalysed reaction is 4-phospho-D-erythronate + NAD(+) = (R)-3-hydroxy-2-oxo-4-phosphooxybutanoate + NADH + H(+). It participates in cofactor biosynthesis; pyridoxine 5'-phosphate biosynthesis; pyridoxine 5'-phosphate from D-erythrose 4-phosphate: step 2/5. Catalyzes the oxidation of erythronate-4-phosphate to 3-hydroxy-2-oxo-4-phosphonooxybutanoate. This Salmonella arizonae (strain ATCC BAA-731 / CDC346-86 / RSK2980) protein is Erythronate-4-phosphate dehydrogenase.